Reading from the N-terminus, the 387-residue chain is UDP-N-acetylglucosamine--N-acetylmuramyl-(pentapeptide) pyrophosphoryl-undecaprenol N-acetylglucosamine transferase (387 aa).

UDP-N-acetyl-alpha-D-glucosamine-binding positions include 14–16 (TGG), asparagine 124, arginine 167, serine 195, and glutamine 296. A disordered region spans residues 366–387 (LPQQNSIEEDSTFEKNQEGAVA). Basic and acidic residues predominate over residues 377-387 (TFEKNQEGAVA).

It belongs to the glycosyltransferase 28 family. MurG subfamily.

It is found in the cell inner membrane. It catalyses the reaction di-trans,octa-cis-undecaprenyl diphospho-N-acetyl-alpha-D-muramoyl-L-alanyl-D-glutamyl-meso-2,6-diaminopimeloyl-D-alanyl-D-alanine + UDP-N-acetyl-alpha-D-glucosamine = di-trans,octa-cis-undecaprenyl diphospho-[N-acetyl-alpha-D-glucosaminyl-(1-&gt;4)]-N-acetyl-alpha-D-muramoyl-L-alanyl-D-glutamyl-meso-2,6-diaminopimeloyl-D-alanyl-D-alanine + UDP + H(+). It functions in the pathway cell wall biogenesis; peptidoglycan biosynthesis. Cell wall formation. Catalyzes the transfer of a GlcNAc subunit on undecaprenyl-pyrophosphoryl-MurNAc-pentapeptide (lipid intermediate I) to form undecaprenyl-pyrophosphoryl-MurNAc-(pentapeptide)GlcNAc (lipid intermediate II). In Zymomonas mobilis subsp. mobilis (strain ATCC 31821 / ZM4 / CP4), this protein is UDP-N-acetylglucosamine--N-acetylmuramyl-(pentapeptide) pyrophosphoryl-undecaprenol N-acetylglucosamine transferase.